The sequence spans 348 residues: Rhodopsin (348 aa).

N-acetylmethionine is present on Met1. At 1–36 the chain is on the extracellular side; it reads MNGTEGPNFYVPFSNKTGVVRSPFEEPQYYLAEPWQ. 2 N-linked (GlcNAc...) asparagine glycosylation sites follow: Asn2 and Asn15. Residues 37–61 traverse the membrane as a helical segment; sequence FSCLAAYMFMLIVLGFPINFLTLYV. Over 62 to 73 the chain is Cytoplasmic; sequence TIQHKKLRTPLN. Residues 74–96 traverse the membrane as a helical segment; sequence YILLNLAIADLFMVFGGFTTTLY. Topologically, residues 97 to 110 are extracellular; the sequence is TSLHGYFVFGPTGC. Cys110 and Cys187 are joined by a disulfide. Residues 111 to 133 form a helical membrane-spanning segment; it reads DLEGFFATLGGEIALWSLVVLAI. The short motif at 134–136 is the 'Ionic lock' involved in activated form stabilization element; sequence ERY. Topologically, residues 134-152 are cytoplasmic; sequence ERYIVVCKPMSNFRFGENH. The helical transmembrane segment at 153 to 173 threads the bilayer; the sequence is AIMGVAFTWVMALACAAPPLV. Residues 174-202 are Extracellular-facing; sequence GWSRYIPEGMQCSCGIDYYTLKPEVNNES. Glu201 contributes to the Zn(2+) binding site. The chain crosses the membrane as a helical span at residues 203-224; it reads FVIYMFVVHFTIPMVVIFFCYG. The Cytoplasmic segment spans residues 225–252; it reads QLVFTVKEAAAQQQESATTQKAEKEVTR. Residues 253-274 traverse the membrane as a helical segment; it reads MVIIMVIAFLICWLPYAGVAFY. The Extracellular segment spans residues 275–286; the sequence is IFTHQGSNFGPI. Gln279 provides a ligand contact to Zn(2+). A helical membrane pass occupies residues 287–308; sequence LMTLPAFFAKTSAVYNPVIYIM. Lys296 bears the N6-(retinylidene)lysine mark. Residues 309–348 are Cytoplasmic-facing; sequence LNKQFRTCMLTTLCCGKIPLGDDEASATASKTETSQVAPA. Residues Cys322 and Cys323 are each lipidated (S-palmitoyl cysteine). An interaction with SAG region spans residues 330-348; it reads DDEASATASKTETSQVAPA. Ser334 carries the post-translational modification Phosphoserine. At Thr336 the chain carries Phosphothreonine. The residue at position 338 (Ser338) is a Phosphoserine. Residues Thr340 and Thr342 each carry the phosphothreonine modification. Ser343 is modified (phosphoserine).

It belongs to the G-protein coupled receptor 1 family. Opsin subfamily. As to quaternary structure, homodimer. May form a complex composed of RHO, GRK1 and RCVRN in a Ca(2+)-dependent manner; RCVRN prevents the interaction between GRK1 and RHO. Interacts with GRK1. Interacts (phosphorylated form) with SAG. Interacts with GNAT1. Interacts with GNAT3. SAG and G-proteins compete for a common binding site. Interacts with PRCD; the interaction promotes PRCD stability. Forms a complex with ASAP1 and ARF4. Forms a complex with ASAP1, RAB11A, Rabin8/RAB3IP, ARF4 and RAB11FIP3; the complex regulates Golgi-to-cilia rhodopsin/RHO transport in photoreceptors. Post-translationally, phosphorylated on some or all of the serine and threonine residues present in the C-terminal region. Contains one covalently linked retinal chromophore. Upon light absorption, the covalently bound 11-cis-retinal is converted to all-trans-retinal. After hydrolysis of the Schiff base and release of the covalently bound all-trans-retinal, active rhodopsin is regenerated by binding of a fresh molecule of 11-cis-retinal.

Its subcellular location is the membrane. It is found in the cell projection. It localises to the cilium. The protein localises to the photoreceptor outer segment. Its function is as follows. Photoreceptor required for image-forming vision at low light intensity. Required for photoreceptor cell viability after birth. Light-induced isomerization of 11-cis to all-trans retinal triggers a conformational change that activates signaling via G-proteins. Subsequent receptor phosphorylation mediates displacement of the bound G-protein alpha subunit by the arrestin SAG and terminates signaling. This Caluromys philander (Bare-tailed woolly opossum) protein is Rhodopsin (RHO).